The chain runs to 478 residues: Glycogen synthase (478 aa).

ADP-alpha-D-glucose is bound at residue lysine 20.

The protein belongs to the glycosyltransferase 1 family. Bacterial/plant glycogen synthase subfamily.

The catalysed reaction is [(1-&gt;4)-alpha-D-glucosyl](n) + ADP-alpha-D-glucose = [(1-&gt;4)-alpha-D-glucosyl](n+1) + ADP + H(+). It participates in glycan biosynthesis; glycogen biosynthesis. In terms of biological role, synthesizes alpha-1,4-glucan chains using ADP-glucose. This chain is Glycogen synthase, found in Cereibacter sphaeroides (strain ATCC 17025 / ATH 2.4.3) (Rhodobacter sphaeroides).